A 229-amino-acid polypeptide reads, in one-letter code: Ferric nitrobindin-like protein (229 aa).

Residues 1–54 form a disordered region; the sequence is MSENSTPNNPVVPGAGADGPSLSDSASISGSDAVNLAAEQSKSTAHRNIPGLGD. Residues 18–33 show a composition bias toward low complexity; sequence DGPSLSDSASISGSDA. The short motif at 82–88 is the GXWXGXG element; sequence GVWRGEG.

This sequence belongs to the nitrobindin family.

The protein is Ferric nitrobindin-like protein of Corynebacterium glutamicum (strain R).